Consider the following 69-residue polypeptide: Defensin-like protein 166 (69 aa).

Residues 1–15 (MIIVIIFLVIYFNNQ) form the signal peptide. Disulfide bonds link Cys-19–Cys-68, Cys-24–Cys-44, Cys-29–Cys-62, and Cys-33–Cys-64.

Belongs to the DEFL family.

The protein resides in the secreted. This chain is Defensin-like protein 166, found in Arabidopsis thaliana (Mouse-ear cress).